Here is a 194-residue protein sequence, read N- to C-terminus: Imidazoleglycerol-phosphate dehydratase (194 aa).

Belongs to the imidazoleglycerol-phosphate dehydratase family.

The protein localises to the cytoplasm. The enzyme catalyses D-erythro-1-(imidazol-4-yl)glycerol 3-phosphate = 3-(imidazol-4-yl)-2-oxopropyl phosphate + H2O. Its pathway is amino-acid biosynthesis; L-histidine biosynthesis; L-histidine from 5-phospho-alpha-D-ribose 1-diphosphate: step 6/9. The polypeptide is Imidazoleglycerol-phosphate dehydratase (Streptococcus sanguinis (strain SK36)).